The following is a 64-amino-acid chain: Large ribosomal subunit protein bL28 (64 aa).

It belongs to the bacterial ribosomal protein bL28 family.

This is Large ribosomal subunit protein bL28 from Bifidobacterium adolescentis (strain ATCC 15703 / DSM 20083 / NCTC 11814 / E194a).